The primary structure comprises 132 residues: D-ribose pyranase (132 aa).

The Proton donor role is filled by His-20. Substrate contacts are provided by residues Asp-28, His-98, and 120-122 (YAN).

It belongs to the RbsD / FucU family. RbsD subfamily. As to quaternary structure, homodecamer.

Its subcellular location is the cytoplasm. The enzyme catalyses beta-D-ribopyranose = beta-D-ribofuranose. The protein operates within carbohydrate metabolism; D-ribose degradation; D-ribose 5-phosphate from beta-D-ribopyranose: step 1/2. Catalyzes the interconversion of beta-pyran and beta-furan forms of D-ribose. The polypeptide is D-ribose pyranase (Geobacillus thermodenitrificans (strain NG80-2)).